We begin with the raw amino-acid sequence, 302 residues long: Rhomboid-related protein 2 (302 aa).

The tract at residues 1–38 (MAVAHEMEMESVNLNMEREGKEEPEEEKMKGNGEGKDF) is disordered. Over residues 16–38 (MEREGKEEPEEEKMKGNGEGKDF) the composition is skewed to basic and acidic residues. Helical transmembrane passes span 71–91 (PLFIILISLAELAVFIYYAVW), 127–147 (LVHAGVQHIVGNLLMQIVLGI), 158–178 (VGLVYLAGVLAGSLASSIFDP), 182–202 (LVGASGGVYALMGGYFMNVIV), 211–231 (FGIVRLLVIILIVASDMGFAL), 244–264 (VSFAAHIAGGFAGMSIGYTVF), and 277–297 (FWIAIAAYVACLLFAVFFNIF). Ser186 (nucleophile) is an active-site residue. The active site involves His249.

The protein belongs to the peptidase S54 family. Proteolytic processing of the proenzyme produces an N- and a C-terminal fragment. The processing is required for activation of the protease.

The protein resides in the cell membrane. It catalyses the reaction Cleaves type-1 transmembrane domains using a catalytic dyad composed of serine and histidine that are contributed by different transmembrane domains.. Involved in regulated intramembrane proteolysis and the subsequent release of functional polypeptides from their membrane anchors. Known substrate: EFNB3. The chain is Rhomboid-related protein 2 (Rhbdl2) from Mus musculus (Mouse).